The primary structure comprises 123 residues: Small ribosomal subunit protein uS12c (123 aa).

The protein belongs to the universal ribosomal protein uS12 family. As to quaternary structure, part of the 30S ribosomal subunit.

It localises to the plastid. The protein localises to the chloroplast. Its function is as follows. With S4 and S5 plays an important role in translational accuracy. Located at the interface of the 30S and 50S subunits. The polypeptide is Small ribosomal subunit protein uS12c (rps12) (Chaetosphaeridium globosum (Charophycean green alga)).